A 162-amino-acid polypeptide reads, in one-letter code: Protein lon-8 (162 aa).

Positions 1–23 (MRNSRFCAILAVISAISVSYVLA) are cleaved as a signal peptide.

The protein resides in the secreted. Functionally, secreted protein that is involved in larval elongation, early adult growth and male tail development. This is Protein lon-8 from Caenorhabditis elegans.